Reading from the N-terminus, the 158-residue chain is MAGPPDSDLDDVARIRLVLARELETINEYEAYARASSNPEVRAFFQHLAAEEKEHVSEAVHMLRMLDSGQNDHFAKPFVPGHFQAAEAPAPATVHVPTPDGPAFSVNGRNGRLPSEPPTSLPPQRLLYGLPAPPPAVESHPLTVGSLRRGGGGSGSGR.

Residues Glu22, Glu52, and His55 each coordinate Fe cation. 2 short sequence motifs (di-iron-binding motif) span residues 52 to 55 (EKEH) and 58 to 61 (EAVH). A disordered region spans residues 92–158 (ATVHVPTPDG…RGGGGSGSGR (67 aa)). The interval 142 to 149 (LTVGSLRR) is probable targeting peptide. Gly residues predominate over residues 148-158 (RRGGGGSGSGR).

This sequence belongs to the ferritin-like superfamily.

It is found in the encapsulin nanocompartment. Functionally, cargo protein of a type 1 encapsulin nanocompartment. May help nucleate Fe atoms in the interior of the encapsulin nanocompartment. Present in about 36 copies/encapsulin nanocompartment. The sequence is that of Encapsulin nanocompartment cargo protein EncB from Myxococcus xanthus (strain DK1622).